Reading from the N-terminus, the 394-residue chain is Elongation factor Tu 2 (394 aa).

One can recognise a tr-type G domain in the interval 10 to 204; the sequence is KPHVNVGTIG…ALDSYIPEPE (195 aa). The interval 19 to 26 is G1; sequence GHVDHGKT. Residue 19–26 participates in GTP binding; that stretch reads GHVDHGKT. Threonine 26 serves as a coordination point for Mg(2+). The G2 stretch occupies residues 60–64; the sequence is GITIN. The interval 81-84 is G3; it reads DCPG. GTP-binding positions include 81–85 and 136–139; these read DCPGH and NKCD. The interval 136-139 is G4; it reads NKCD. The G5 stretch occupies residues 174–176; that stretch reads SAL.

The protein belongs to the TRAFAC class translation factor GTPase superfamily. Classic translation factor GTPase family. EF-Tu/EF-1A subfamily. As to quaternary structure, monomer.

The protein localises to the cytoplasm. The catalysed reaction is GTP + H2O = GDP + phosphate + H(+). Its function is as follows. GTP hydrolase that promotes the GTP-dependent binding of aminoacyl-tRNA to the A-site of ribosomes during protein biosynthesis. The chain is Elongation factor Tu 2 from Shewanella oneidensis (strain ATCC 700550 / JCM 31522 / CIP 106686 / LMG 19005 / NCIMB 14063 / MR-1).